Here is a 984-residue protein sequence, read N- to C-terminus: MYCBP-associated protein (984 aa).

Disordered regions lie at residues 61–88 (LEAS…EEPE) and 218–240 (GESK…PQHN). Positions 218 to 231 (GESKQKAPKEEKRP) are enriched in basic and acidic residues. Thr613 carries the post-translational modification Phosphothreonine. The residue at position 619 (Ser619) is a Phosphoserine. Disordered stretches follow at residues 693 to 729 (SPIS…KSIM) and 842 to 917 (PEEQ…ASQD). The segment covering 862–910 (AGKEERKGAAQEKKQLGIKDKEDKKGAKLLGKEDRPNSKKHKAKDDKKV) has biased composition (basic and acidic residues).

In terms of assembly, interacts with MYCBP. Expressed specifically in testis.

It is found in the cytoplasm. It localises to the membrane. In terms of biological role, may play a role in spermatogenesis. May be involved in synaptic processes. This Homo sapiens (Human) protein is MYCBP-associated protein.